The primary structure comprises 395 residues: Imidazolonepropionase (395 aa).

His63 and His65 together coordinate Fe(3+). Zn(2+) is bound by residues His63 and His65. Arg72, Tyr135, and His168 together coordinate 4-imidazolone-5-propanoate. Tyr135 contacts N-formimidoyl-L-glutamate. Position 233 (His233) interacts with Fe(3+). His233 contributes to the Zn(2+) binding site. Gln236 provides a ligand contact to 4-imidazolone-5-propanoate. Fe(3+) is bound at residue Asp308. Zn(2+) is bound at residue Asp308. 2 residues coordinate N-formimidoyl-L-glutamate: Asn310 and Gly312. Thr313 contacts 4-imidazolone-5-propanoate.

Belongs to the metallo-dependent hydrolases superfamily. HutI family. Zn(2+) is required as a cofactor. Requires Fe(3+) as cofactor.

The protein resides in the cytoplasm. The catalysed reaction is 4-imidazolone-5-propanoate + H2O = N-formimidoyl-L-glutamate. It functions in the pathway amino-acid degradation; L-histidine degradation into L-glutamate; N-formimidoyl-L-glutamate from L-histidine: step 3/3. Functionally, catalyzes the hydrolytic cleavage of the carbon-nitrogen bond in imidazolone-5-propanoate to yield N-formimidoyl-L-glutamate. It is the third step in the universal histidine degradation pathway. This Cereibacter sphaeroides (strain KD131 / KCTC 12085) (Rhodobacter sphaeroides) protein is Imidazolonepropionase.